A 279-amino-acid chain; its full sequence is Putative pyruvate, phosphate dikinase regulatory protein (279 aa).

153–160 provides a ligand contact to ADP; sequence GISRTSKT.

It belongs to the pyruvate, phosphate/water dikinase regulatory protein family. PDRP subfamily.

The catalysed reaction is N(tele)-phospho-L-histidyl/L-threonyl-[pyruvate, phosphate dikinase] + ADP = N(tele)-phospho-L-histidyl/O-phospho-L-threonyl-[pyruvate, phosphate dikinase] + AMP + H(+). The enzyme catalyses N(tele)-phospho-L-histidyl/O-phospho-L-threonyl-[pyruvate, phosphate dikinase] + phosphate + H(+) = N(tele)-phospho-L-histidyl/L-threonyl-[pyruvate, phosphate dikinase] + diphosphate. In terms of biological role, bifunctional serine/threonine kinase and phosphorylase involved in the regulation of the pyruvate, phosphate dikinase (PPDK) by catalyzing its phosphorylation/dephosphorylation. The sequence is that of Putative pyruvate, phosphate dikinase regulatory protein from Brucella melitensis biotype 2 (strain ATCC 23457).